The sequence spans 183 residues: uncharacterized protein (183 aa).

Belongs to the asfivirus S183L family.

This is an uncharacterized protein from Ornithodoros (relapsing fever ticks).